The sequence spans 443 residues: Tubulin beta-3 chain (443 aa).

GTP-binding residues include glutamine 11, glutamate 69, serine 138, glycine 142, threonine 143, glycine 144, asparagine 204, and asparagine 226. Glutamate 69 provides a ligand contact to Mg(2+).

The protein belongs to the tubulin family. In terms of assembly, dimer of alpha and beta chains. A typical microtubule is a hollow water-filled tube with an outer diameter of 25 nm and an inner diameter of 15 nM. Alpha-beta heterodimers associate head-to-tail to form protofilaments running lengthwise along the microtubule wall with the beta-tubulin subunit facing the microtubule plus end conferring a structural polarity. Microtubules usually have 13 protofilaments but different protofilament numbers can be found in some organisms and specialized cells. The cofactor is Mg(2+).

It is found in the cytoplasm. The protein resides in the cytoskeleton. In terms of biological role, tubulin is the major constituent of microtubules, a cylinder consisting of laterally associated linear protofilaments composed of alpha- and beta-tubulin heterodimers. Microtubules grow by the addition of GTP-tubulin dimers to the microtubule end, where a stabilizing cap forms. Below the cap, tubulin dimers are in GDP-bound state, owing to GTPase activity of alpha-tubulin. This is Tubulin beta-3 chain (TUB-3) from Echinococcus multilocularis (Fox tapeworm).